The following is a 92-amino-acid chain: Small ribosomal subunit protein uS19 (92 aa).

This sequence belongs to the universal ribosomal protein uS19 family.

In terms of biological role, protein S19 forms a complex with S13 that binds strongly to the 16S ribosomal RNA. The protein is Small ribosomal subunit protein uS19 of Bacillus thuringiensis subsp. konkukian (strain 97-27).